A 262-amino-acid polypeptide reads, in one-letter code: Small ribosomal subunit protein uS3 (262 aa).

One can recognise a KH type-2 domain in the interval 38–106 (LRKIIAKELE…KVKLNIQEIH (69 aa)). Residues 211–262 (KGQTQLPQPAVAAARPGLTVEEEERPQRKGGRGGRGANAGAARGGRGGRSRS) form a disordered region. The segment covering 243–255 (GGRGANAGAARGG) has biased composition (gly residues).

Belongs to the universal ribosomal protein uS3 family. As to quaternary structure, part of the 30S ribosomal subunit. Forms a tight complex with proteins S10 and S14.

Functionally, binds the lower part of the 30S subunit head. Binds mRNA in the 70S ribosome, positioning it for translation. This Roseiflexus sp. (strain RS-1) protein is Small ribosomal subunit protein uS3.